The sequence spans 442 residues: MVPSGVRTGRWVAAARAAQRRPRVDSLGQPPSPESASTRAALYVHWPYCEKRCSYCNFNKYIPRGVEEGTVRNCLVTEARTLLRLSGVQRVESVFFGGGTPSLASPHTVAAVLEAVAQEVYLPADSEVTLEANPTSAPGPRLAAFGAAGVNRLSIGLQSLDDAELQLLGRTHSASDALRTLAEARLLFPGRVSVDLMLGLPAQKVEPWLQQLQKLLYHCDDHLSLYQLTLERGTSLFAQVQQGTLPAPDPDLAAEMYQEGRTVLRDAGFRQYEVSNFARNGALSTHNWTYWQCGQYLGIGPGAHGRFVPQGTGGHTREARIQTLEPDNWMKEVTLFGHGTRKCVRLGKLELLEEVLAMGLRTDVGVTHQHWQQFEPQLTLWDVFGASKEVEELLAQGLLLLDYRGLRCSWEGLAVLDSLLLTLLPQLQEAWQHRPSSPVSGG.

A mitochondrion-targeting transit peptide spans 1 to 17 (MVPSGVRTGRWVAAARA). The Radical SAM core domain maps to 34 to 270 (ESASTRAALY…RTVLRDAGFR (237 aa)). An S-adenosyl-L-methionine-binding site is contributed by Tyr-43. Positions 49, 53, and 56 each coordinate [4Fe-4S] cluster. Residues Gly-98, 99–100 (GT), Glu-131, Gln-158, Arg-170, and Asp-195 each bind S-adenosyl-L-methionine.

This sequence belongs to the anaerobic coproporphyrinogen-III oxidase family. HemW subfamily. It depends on [4Fe-4S] cluster as a cofactor.

It is found in the mitochondrion. In terms of biological role, may be a heme chaperone, appears to bind heme. Homologous bacterial proteins do not have oxygen-independent coproporphyrinogen-III oxidase activity. Binds 1 [4Fe-4S] cluster. The cluster is coordinated with 3 cysteines and an exchangeable S-adenosyl-L-methionine. The chain is Radical S-adenosyl methionine domain-containing protein 1, mitochondrial (Rsad1) from Mus musculus (Mouse).